A 75-amino-acid chain; its full sequence is Putative membrane protein insertion efficiency factor (75 aa).

The protein belongs to the UPF0161 family.

Its subcellular location is the cell membrane. Could be involved in insertion of integral membrane proteins into the membrane. This chain is Putative membrane protein insertion efficiency factor (ytjA), found in Bacillus subtilis (strain 168).